We begin with the raw amino-acid sequence, 153 residues long: Probable disulfide formation protein (153 aa).

Residues 4 to 23 (DTRLYLAWLVALAATLGSLY) traverse the membrane as a helical segment. A disulfide bridge connects residues C33 and C36. A run of 2 helical transmembrane segments spans residues 38–57 (AQRIFMYPLAVILGIAAFVG) and 64–81 (YVLPLAALGLGFAIFQNL). C93 and C101 are disulfide-bonded. The helical transmembrane segment at 117–139 (RALTIPVLSMIAFALILALLSWP) threads the bilayer.

This sequence belongs to the DsbB family. BdbC subfamily.

Its subcellular location is the cell membrane. In terms of biological role, required for disulfide bond formation in some proteins. The polypeptide is Probable disulfide formation protein (Deinococcus radiodurans (strain ATCC 13939 / DSM 20539 / JCM 16871 / CCUG 27074 / LMG 4051 / NBRC 15346 / NCIMB 9279 / VKM B-1422 / R1)).